The sequence spans 374 residues: Flagellar P-ring protein (374 aa).

The signal sequence occupies residues 1-29; sequence MPGVGISRIVRIAVAALVALAPLMTPAHA.

It belongs to the FlgI family. The basal body constitutes a major portion of the flagellar organelle and consists of four rings (L,P,S, and M) mounted on a central rod.

The protein localises to the periplasm. It localises to the bacterial flagellum basal body. Functionally, assembles around the rod to form the L-ring and probably protects the motor/basal body from shearing forces during rotation. The polypeptide is Flagellar P-ring protein (Nitrobacter hamburgensis (strain DSM 10229 / NCIMB 13809 / X14)).